The sequence spans 186 residues: Quinone reductase (186 aa).

FMN-binding positions include 13 to 20, 80 to 83, and Ser-116; these read SLRKESYN and EHNR.

Belongs to the SsuE family. Homotetramer. Dimer of dimers. The tetrameric configuration has a central role in chromate reductase activity. Requires FMN as cofactor.

The catalysed reaction is a quinone + NADH + H(+) = a quinol + NAD(+). It carries out the reaction a quinone + NADPH + H(+) = a quinol + NADP(+). The enzyme catalyses Cr(6+) + 2 NADH + O2 = Cr(3+) + superoxide + 2 NAD(+) + 2 H(+). It catalyses the reaction Cr(6+) + 2 NADPH + O2 = Cr(3+) + superoxide + 2 NADP(+) + 2 H(+). With respect to regulation, non-competitively inhibited by sulfate. Functionally, catalyzes the reduction of quinones. Acts by simultaneous two-electron transfer, avoiding formation of highly reactive semiquinone intermediates and producing quinols that promote tolerance of H(2)O(2). Quinone reduction is probably the primary biological role of ChrR. Can also reduce toxic chromate to insoluble and less toxic Cr(3+). Catalyzes the transfer of three electrons to Cr(6+) producing Cr(3+) and one electron to molecular oxygen. This reaction produces transiently a minimal amount of the toxic Cr(5+) species and reactive oxygen species (ROS). Chromate reduction protects the cell against chromate toxicity, but is likely a secondary activity. The polypeptide is Quinone reductase (chrR) (Pseudomonas putida (Arthrobacter siderocapsulatus)).